Consider the following 526-residue polypeptide: Cyclin-L1 (526 aa).

The segment at 1 to 36 (MASGPHSTATAAAAASSAAPSAGGSSSGTTTTTTTT) is disordered. Cyclin-like stretches follow at residues 88-190 (ELIQ…RVLK) and 203-287 (KIIV…ETLR). The tract at residues 318–526 (KGLNPDGTPA…SRSGHGRHRR (209 aa)) is disordered. A Phosphothreonine modification is found at threonine 325. Serine 335 and serine 338 each carry phosphoserine. Residues lysine 339 and lysine 347 each participate in a glycyl lysine isopeptide (Lys-Gly) (interchain with G-Cter in SUMO2) cross-link. Residues 342–352 (SPREVKAEEKS) are compositionally biased toward basic and acidic residues. A phosphoserine mark is found at serine 352 and serine 355. A compositionally biased stretch (basic and acidic residues) spans 361–370 (VKKEPEDRQQ). Lysine 362 participates in a covalent cross-link: Glycyl lysine isopeptide (Lys-Gly) (interchain with G-Cter in SUMO2). A Phosphoserine modification is found at serine 374. 4 stretches are compositionally biased toward basic residues: residues 382–418 (DSKRSRNSRSASRSRSRTRSRSRSHTPRRHYNNRRSR), 438–452 (RRHHNHGSPHLKAKH), 460–476 (SNRHGHKRKKSRSRSQS), and 486–498 (KKHRHERGHHRDR). Positions 390 to 432 (RSASRSRSRTRSRSRSHTPRRHYNNRRSRSGTYSSRSRSRSRS) are RS. At serine 445 the chain carries Phosphoserine. Residues 499–508 (RERSRSFERS) show a composition bias toward basic and acidic residues. Positions 509–526 (HKSKHHGGSRSGHGRHRR) are enriched in basic residues.

The protein belongs to the cyclin family. Cyclin L subfamily. As to quaternary structure, (Microbial infection) Interacts with human herpes virus 1 (HHV-1) transcriptional regulator ICP22. Interacts with POLR2A via its hyperphosphorylated C-terminal domain (CTD). Interacts with CDK11A, CDK12 and CDK13. Isoforms 1 and 2, but not isoform 3, interact with CDK11B. May form a ternary complex with CDK11B and casein kinase II (CKII). Interacts with pre-mRNA-splicing factors, including at least SRSF1, SRSF2 and SRSF7/SLU7. In terms of tissue distribution, widely expressed. Overexpression in primary tumors of head and neck squamous cell carcinomas (HNSCC).

Its subcellular location is the nucleus speckle. It localises to the nucleus. The protein resides in the nucleoplasm. Functionally, involved in pre-mRNA splicing. Functions in association with cyclin-dependent kinases (CDKs). Inhibited by the CDK-specific inhibitor CDKN1A/p21. May play a role in the regulation of RNA polymerase II (pol II). May be a candidate proto-oncogene in head and neck squamous cell carcinomas (HNSCC). The chain is Cyclin-L1 (CCNL1) from Homo sapiens (Human).